The following is a 180-amino-acid chain: Protein sll1483 (180 aa).

An N-terminal signal peptide occupies residues 1-26 (MKTAARIVAFTALTGFALGMPTVAMA). Positions 45 to 176 (AMTIVEVAAG…GVIHVIDQVI (132 aa)) constitute an FAS1 domain.

The chain is Protein sll1483 from Synechocystis sp. (strain ATCC 27184 / PCC 6803 / Kazusa).